The following is a 103-amino-acid chain: MYAIFKINGVQYKAKSGSVVCLNKISGDIGSTIEIKKIMALFNDEKIIFGQPFIKNSRIIATIKKHINGKKISIVKFSRRKHFKKITGYRQKLTNIKIIDICC.

This sequence belongs to the bacterial ribosomal protein bL21 family. As to quaternary structure, part of the 50S ribosomal subunit. Contacts protein L20.

Functionally, this protein binds to 23S rRNA in the presence of protein L20. The chain is Large ribosomal subunit protein bL21 from Wigglesworthia glossinidia brevipalpis.